We begin with the raw amino-acid sequence, 87 residues long: uncharacterized protein (87 aa).

An N-terminal signal peptide occupies residues 1-25 (MKIRKILLSSALSFGMLISAVPALA).

This is an uncharacterized protein from Bacillus subtilis (strain 168).